The chain runs to 302 residues: 4-diphosphocytidyl-2-C-methyl-D-erythritol kinase (302 aa).

K32 is an active-site residue. 115–125 (PMGGGVGGGSS) serves as a coordination point for ATP. D157 is an active-site residue.

It belongs to the GHMP kinase family. IspE subfamily.

The catalysed reaction is 4-CDP-2-C-methyl-D-erythritol + ATP = 4-CDP-2-C-methyl-D-erythritol 2-phosphate + ADP + H(+). The protein operates within isoprenoid biosynthesis; isopentenyl diphosphate biosynthesis via DXP pathway; isopentenyl diphosphate from 1-deoxy-D-xylulose 5-phosphate: step 3/6. Catalyzes the phosphorylation of the position 2 hydroxy group of 4-diphosphocytidyl-2C-methyl-D-erythritol. The chain is 4-diphosphocytidyl-2-C-methyl-D-erythritol kinase from Actinobacillus succinogenes (strain ATCC 55618 / DSM 22257 / CCUG 43843 / 130Z).